We begin with the raw amino-acid sequence, 96 residues long: Large ribosomal subunit protein bL21 (96 aa).

This sequence belongs to the bacterial ribosomal protein bL21 family. As to quaternary structure, part of the 50S ribosomal subunit. Contacts protein L20.

This protein binds to 23S rRNA in the presence of protein L20. The sequence is that of Large ribosomal subunit protein bL21 from Prosthecochloris aestuarii (strain DSM 271 / SK 413).